The chain runs to 89 residues: Small ribosomal subunit protein uS14A (89 aa).

Belongs to the universal ribosomal protein uS14 family. As to quaternary structure, part of the 30S ribosomal subunit. Contacts proteins S3 and S10.

Binds 16S rRNA, required for the assembly of 30S particles and may also be responsible for determining the conformation of the 16S rRNA at the A site. The polypeptide is Small ribosomal subunit protein uS14A (Lactococcus lactis subsp. lactis (strain IL1403) (Streptococcus lactis)).